The sequence spans 887 residues: Alanine--tRNA ligase (887 aa).

Zn(2+) is bound by residues histidine 581, histidine 585, cysteine 683, and histidine 687.

The protein belongs to the class-II aminoacyl-tRNA synthetase family. It depends on Zn(2+) as a cofactor.

The protein resides in the cytoplasm. It catalyses the reaction tRNA(Ala) + L-alanine + ATP = L-alanyl-tRNA(Ala) + AMP + diphosphate. Functionally, catalyzes the attachment of alanine to tRNA(Ala) in a two-step reaction: alanine is first activated by ATP to form Ala-AMP and then transferred to the acceptor end of tRNA(Ala). Also edits incorrectly charged Ser-tRNA(Ala) and Gly-tRNA(Ala) via its editing domain. The sequence is that of Alanine--tRNA ligase from Ehrlichia canis (strain Jake).